A 1330-amino-acid polypeptide reads, in one-letter code: Kinectin (1330 aa).

Topologically, residues 1–6 are cytoplasmic; it reads MEFYES. A helical; Signal-anchor for type II membrane protein transmembrane segment spans residues 7-29; that stretch reads TYFIVLIPSVVITVIFLFFWLFM. At 30–1330 the chain is on the lumenal side; that stretch reads KETLYDEVLA…KEKEHYQVLE (1301 aa). 2 disordered regions span residues 49 to 81 and 108 to 218; these read PTKT…ESVP and SSSV…KQKA. A phosphoserine mark is found at S75 and S77. Positions 113–122 are enriched in basic residues; the sequence is ERKKKEKKHK. Positions 123–135 are enriched in basic and acidic residues; it reads PVLEEQVTKESDV. T153 carries the post-translational modification Phosphothreonine. A Phosphoserine modification is found at S156. Positions 161-171 are enriched in basic residues; the sequence is SKKKPGQKKSK. 5 N-linked (GlcNAc...) asparagine glycosylation sites follow: N172, N435, N772, N904, and N1055. The segment covering 172–182 has biased composition (basic and acidic residues); sequence NGSDDQDKKVE. Residues 332–1329 adopt a coiled-coil conformation; it reads HQLQEKDKLL…TKEKEHYQVL (998 aa). Phosphoserine is present on S1085. N1236 carries an N-linked (GlcNAc...) asparagine glycan. A Phosphoserine modification is found at S1286. An N-linked (GlcNAc...) asparagine glycan is attached at N1302.

Belongs to the kinectin family. As to quaternary structure, parallel homodimers formed between the membrane-bound and the cytosolic form, and also between 2 cytosolic forms. As to expression, expressed in male brain, heart, kidney, liver, lung, spleen and testis.

The protein resides in the endoplasmic reticulum membrane. Functionally, receptor for kinesin thus involved in kinesin-driven vesicle motility. In Vulpes vulpes (Red fox), this protein is Kinectin (KTN1).